The chain runs to 281 residues: NADH-cytochrome b5 reductase 1 (281 aa).

The helical transmembrane segment at Val-2 to Val-22 threads the bilayer. The FAD-binding FR-type domain maps to Glu-37 to Gln-141. FAD contacts are provided by residues Ala-121–Gly-136 and Glu-147–Leu-179.

It belongs to the flavoprotein pyridine nucleotide cytochrome reductase family. In terms of assembly, monomer. Component of the 2-(3-amino-3-carboxypropyl)histidine synthase complex composed of DPH1, DPH2, DPH3 and a NADH-dependent reductase, predominantly CBR1. The cofactor is FAD.

The protein localises to the mitochondrion outer membrane. It catalyses the reaction 2 Fe(III)-[cytochrome b5] + NADH = 2 Fe(II)-[cytochrome b5] + NAD(+) + H(+). The enzyme catalyses 2 Fe(3+)-[Dph3] + NADH = 2 Fe(2+)-[Dph3] + NAD(+) + H(+). Its pathway is protein modification; peptidyl-diphthamide biosynthesis. Functionally, NADH-dependent reductase for DPH3 and cytochrome b5. Required for the first step of diphthamide biosynthesis, a post-translational modification of histidine which occurs in elongation factor 2. DPH1 and DPH2 transfer a 3-amino-3-carboxypropyl (ACP) group from S-adenosyl-L-methionine (SAM) to a histidine residue, the reaction is assisted by a reduction system comprising DPH3 and a NADH-dependent reductase, predominantly CBR1. By reducing DPH3, also involved in the formation of the tRNA wobble base modification mcm5s 2U (5-methoxycarbonylmethyl-2-thiouridine), mediated by the elongator complex. The cytochrome b5/NADH cytochrome b5 reductase electron transfer system supports the catalytic activity of several sterol biosynthetic enzymes. In Kluyveromyces lactis (strain ATCC 8585 / CBS 2359 / DSM 70799 / NBRC 1267 / NRRL Y-1140 / WM37) (Yeast), this protein is NADH-cytochrome b5 reductase 1 (CBR1).